Consider the following 442-residue polypeptide: Putative aminohydrolase SsnA (442 aa).

Zn(2+)-binding residues include H62, H64, H227, and D312.

The protein belongs to the metallo-dependent hydrolases superfamily. ATZ/TRZ family.

This Escherichia coli (strain K12) protein is Putative aminohydrolase SsnA (ssnA).